The sequence spans 537 residues: uncharacterized protein (537 aa).

This is an uncharacterized protein from Methanocaldococcus jannaschii (strain ATCC 43067 / DSM 2661 / JAL-1 / JCM 10045 / NBRC 100440) (Methanococcus jannaschii).